We begin with the raw amino-acid sequence, 251 residues long: HTH-type transcriptional regulator UlaR (251 aa).

One can recognise an HTH deoR-type domain in the interval 3-58 (EAQRHQILLEMLAQLGFVTVEKVVERLGISPATARRDINKLDESGKLKKVRNGAEA). A DNA-binding region (H-T-H motif) is located at residues 20-39 (VTVEKVVERLGISPATARRD).

The protein resides in the cytoplasm. In terms of biological role, represses ulaG and the ulaABCDEF operon. In Escherichia coli O139:H28 (strain E24377A / ETEC), this protein is HTH-type transcriptional regulator UlaR.